The following is a 375-amino-acid chain: Trichodiene synthase (375 aa).

The protein belongs to the trichodiene synthase family.

It carries out the reaction (2E,6E)-farnesyl diphosphate = trichodiene + diphosphate. It functions in the pathway sesquiterpene biosynthesis; trichothecene biosynthesis. Its function is as follows. TS is a member of the terpene cyclase group of enzymes. It catalyzes the isomerization and cyclization of farnesyl pyro-phosphate to form trichodiene, the first cyclic intermediate in the biosynthetic pathway for trichothecenes. It serves to branch trichothecene biosynthesis from the isoprenoid pathway. In Fusarium boothii, this protein is Trichodiene synthase (TRI5).